The following is a 206-amino-acid chain: MPDAVQAPYPAYRPEPNMQTITIAPPKRSWFSLLSWAVVLAVLVVSWQGAEMAPLTLIKDGGNMATFAADFFPPDFSQWQDYLTEMAVTLQIAVWGTALAVVLSIPFGLMSAENLVPWWVYQPVRRLMDACRAINEMVFAMLFVVAVGLGPFAGVLACWRCLSTPPACSPSCFPKRWKRLSPARWKAFAPPVPTSSKRSSTACCHR.

A run of 3 helical transmembrane segments spans residues 30-50 (WFSLLSWAVVLAVLVVSWQGA), 92-112 (IAVWGTALAVVLSIPFGLMSA), and 137-157 (MVFAMLFVVAVGLGPFAGVLA).

As to quaternary structure, if the reading frame is restored, the complex is composed of two ATP-binding proteins (PhnC), two transmembrane proteins (PhnE) and a solute-binding protein (PhnD).

It is found in the cell inner membrane. Functionally, N-terminal fragment of the PhnE protein, part of a phosphonate usage operon that is cryptic in K12 strains. Growth of K12 strains on phosphonate can be observed when it is used as the sole phosphorus source after a 60 hour lag period, suggesting the operon is activated. An intact PhnE in strain B is (AC A0A140NFA3). Part of the binding-protein-dependent transport system for phosphonates; probably responsible for the translocation of the substrate across the membrane. This chain is Putative cryptic phosphonate transport system permease protein PhnE1 (phnE1), found in Escherichia coli (strain K12).